We begin with the raw amino-acid sequence, 368 residues long: Nuclease EXOG, mitochondrial (368 aa).

A mitochondrion-targeting transit peptide spans 1-41 (MAIKSIASRLRGSRRFLSGFVAGAVVGAAGAGLAALQFFRS). The active-site Proton acceptor is His-140. Asn-171 contacts a divalent metal cation.

This sequence belongs to the DNA/RNA non-specific endonuclease family. In terms of assembly, homodimer. The cofactor is a divalent metal cation. As to expression, ubiquitous.

Its subcellular location is the mitochondrion inner membrane. In terms of biological role, endo/exonuclease with nicking activity towards supercoiled DNA, a preference for single-stranded DNA and 5'-3' exonuclease activity. The polypeptide is Nuclease EXOG, mitochondrial (EXOG) (Homo sapiens (Human)).